Reading from the N-terminus, the 429-residue chain is Adenosylhomocysteinase (429 aa).

Positions 64, 136, and 161 each coordinate substrate. 162–164 (TTT) serves as a coordination point for NAD(+). K191 and D195 together coordinate substrate. NAD(+) is bound by residues N196, 225–230 (GYGWCG), E248, N283, 304–306 (SGH), and N351.

It belongs to the adenosylhomocysteinase family. The cofactor is NAD(+).

It is found in the cytoplasm. The enzyme catalyses S-adenosyl-L-homocysteine + H2O = L-homocysteine + adenosine. It participates in amino-acid biosynthesis; L-homocysteine biosynthesis; L-homocysteine from S-adenosyl-L-homocysteine: step 1/1. Functionally, may play a key role in the regulation of the intracellular concentration of adenosylhomocysteine. In Thermosynechococcus vestitus (strain NIES-2133 / IAM M-273 / BP-1), this protein is Adenosylhomocysteinase.